We begin with the raw amino-acid sequence, 75 residues long: Cytochrome c oxidase subunit 6C (75 aa).

Over 1 to 13 the chain is Mitochondrial matrix; the sequence is MAPEVLPKPQMRG. The helical transmembrane segment at 14-54 threads the bilayer; sequence LLARRLRFHMVTGFVLSLGVAALYKVGVADKRKKAYADFYR. At 55–75 the chain is on the mitochondrial intermembrane side; it reads NYDAMKDFEEMRKAGIFQSVK.

This sequence belongs to the cytochrome c oxidase subunit 6c family. Component of the cytochrome c oxidase (complex IV, CIV), a multisubunit enzyme composed of 14 subunits. The complex is composed of a catalytic core of 3 subunits MT-CO1, MT-CO2 and MT-CO3, encoded in the mitochondrial DNA, and 11 supernumerary subunits COX4I, COX5A, COX5B, COX6A, COX6B, COX6C, COX7A, COX7B, COX7C, COX8 and NDUFA4, which are encoded in the nuclear genome. The complex exists as a monomer or a dimer and forms supercomplexes (SCs) in the inner mitochondrial membrane with NADH-ubiquinone oxidoreductase (complex I, CI) and ubiquinol-cytochrome c oxidoreductase (cytochrome b-c1 complex, complex III, CIII), resulting in different assemblies (supercomplex SCI(1)III(2)IV(1) and megacomplex MCI(2)III(2)IV(2)).

It localises to the mitochondrion inner membrane. The protein operates within energy metabolism; oxidative phosphorylation. In terms of biological role, component of the cytochrome c oxidase, the last enzyme in the mitochondrial electron transport chain which drives oxidative phosphorylation. The respiratory chain contains 3 multisubunit complexes succinate dehydrogenase (complex II, CII), ubiquinol-cytochrome c oxidoreductase (cytochrome b-c1 complex, complex III, CIII) and cytochrome c oxidase (complex IV, CIV), that cooperate to transfer electrons derived from NADH and succinate to molecular oxygen, creating an electrochemical gradient over the inner membrane that drives transmembrane transport and the ATP synthase. Cytochrome c oxidase is the component of the respiratory chain that catalyzes the reduction of oxygen to water. Electrons originating from reduced cytochrome c in the intermembrane space (IMS) are transferred via the dinuclear copper A center (CU(A)) of subunit 2 and heme A of subunit 1 to the active site in subunit 1, a binuclear center (BNC) formed by heme A3 and copper B (CU(B)). The BNC reduces molecular oxygen to 2 water molecules using 4 electrons from cytochrome c in the IMS and 4 protons from the mitochondrial matrix. This is Cytochrome c oxidase subunit 6C (COX6C) from Macaca silenus (Lion-tailed macaque).